The primary structure comprises 428 residues: Putative aminotransferase MSMEG_6286/MSMEI_6121 (428 aa).

Substrate is bound at residue G37. Residues Y72, 102–105 (ASLE), N191, 222–225 (AYAV), and 256–258 (STS) contribute to the pyridoxal 5'-phosphate site. An Isoglutamyl lysine isopeptide (Lys-Gln) (interchain with Q-Cter in protein Pup) cross-link involves residue K339.

Belongs to the class-I pyridoxal-phosphate-dependent aminotransferase family. It depends on pyridoxal 5'-phosphate as a cofactor.

This Mycolicibacterium smegmatis (strain ATCC 700084 / mc(2)155) (Mycobacterium smegmatis) protein is Putative aminotransferase MSMEG_6286/MSMEI_6121.